The following is a 313-amino-acid chain: tRNA dimethylallyltransferase (313 aa).

17 to 24 serves as a coordination point for ATP; the sequence is GPTASGKT. 19–24 contacts substrate; that stretch reads TASGKT. 4 interaction with substrate tRNA regions span residues 42–45, 166–170, 247–252, and 280–287; these read DSAL, QRLSR, RCVGYR, and KRQITWLR.

This sequence belongs to the IPP transferase family. In terms of assembly, monomer. Mg(2+) is required as a cofactor.

It catalyses the reaction adenosine(37) in tRNA + dimethylallyl diphosphate = N(6)-dimethylallyladenosine(37) in tRNA + diphosphate. In terms of biological role, catalyzes the transfer of a dimethylallyl group onto the adenine at position 37 in tRNAs that read codons beginning with uridine, leading to the formation of N6-(dimethylallyl)adenosine (i(6)A). The chain is tRNA dimethylallyltransferase from Photorhabdus laumondii subsp. laumondii (strain DSM 15139 / CIP 105565 / TT01) (Photorhabdus luminescens subsp. laumondii).